The primary structure comprises 505 residues: MGRFAAALVGSLFWLGLLLCGLGSLASAEPRAPPNRIAIVGAGIGGTSSAYYLRKKFGKDVKIDVFEREEVGGRLATLKVQGHDYEAGGSVIHPLNLHMKRFVKELGLSSVPASGGLVGVYNGKSLVFEESSWFVINVIKLVWRYGFQSLRMHMWVEDLLDKFMRIYRYQSHDYAFSSVEKLMHAIGGDDYVRLLNQTLRENLKKAGFSETFLNEMIAPVMKVNYGQSTDINAFVGAVSLTAADSNLWAVEGGNKIVCSGLLQASSSNLISGSVMSIEEKTRTKQTGNPTKMYEVVYKTGSETHSDFYDIVLVAAPLNRKMSNITFRNFDPPIEEFNDPYQQLVTTFIKGELNSTLFSSRPKDQFGLSAILVTDDSDMFINSLSIVASVRQKEGPPPAVDGMHVWKTFSRDILTKEQISKLFLSYDYAVRKPWLSYPHYEPPQKCPSIILHDRLYYLNGIEFAASCMEMSAIAGYNAALLAYHRWNGNEDMIDQDDLYERLKTEL.

The first 28 residues, 1–28, serve as a signal peptide directing secretion; that stretch reads MGRFAAALVGSLFWLGLLLCGLGSLASA. Asn196, Asn323, and Asn353 each carry an N-linked (GlcNAc...) asparagine glycan.

This sequence belongs to the prenylcysteine oxidase family. The cofactor is FAD. In terms of tissue distribution, highly expressed in the liver, kidney, heart and brain.

It localises to the lysosome. It catalyses the reaction an S-polyprenyl-L-cysteine + O2 + H2O = a polyprenal + L-cysteine + H2O2. The enzyme catalyses S-(2E,6E)-farnesyl-L-cysteine + O2 + H2O = (2E,6E)-farnesal + L-cysteine + H2O2. The catalysed reaction is [(2E,6E,10E)-geranylgeranyl]-L-cysteine + O2 + H2O = (2E,6E,10E)-geranylgeranial + L-cysteine + H2O2. Functionally, prenylcysteine oxidase that cleaves the thioether bond of prenyl-L-cysteines, such as farnesylcysteine and geranylgeranylcysteine. Only active against free prenylcysteines and not prenylcysteine residues within prenylated proteins or peptides. Involved in the final step in the degradation of prenylated proteins, by degrading prenylcysteines after the protein has been degraded. The polypeptide is Prenylcysteine oxidase 1 (Mus musculus (Mouse)).